The following is a 305-amino-acid chain: ADP,ATP carrier protein (305 aa).

Solcar repeat units lie at residues 8–101 (SNFA…IKAM), 112–204 (KWFA…LKPL), and 212–298 (NSFL…LQVI). 5 consecutive transmembrane segments (helical) span residues 10-37 (FAID…VKLL), 78-102 (TANV…KAMF), 110-130 (YAKW…LSLL), 180-201 (FLPS…YDSL), and 215-235 (LASF…SYPL). The ADP site is built by Arg-83 and Lys-95. ADP is bound at residue Arg-239. Positions 239-244 (RRRMMM) are important for transport activity. Positions 239–244 (RRRMMM) match the Nucleotide carrier signature motif motif. A helical transmembrane segment spans residues 275–295 (CGANILRGVAGAGVISMYDQL).

This sequence belongs to the mitochondrial carrier (TC 2.A.29) family. Monomer.

It is found in the mitochondrion inner membrane. It catalyses the reaction ADP(in) + ATP(out) = ADP(out) + ATP(in). The matrix-open state (m-state) is inhibited by the membrane-permeable bongkrekic acid (BKA). The cytoplasmic-open state (c-state) is inhibited by the membrane-impermeable toxic inhibitor carboxyatractyloside (CATR). Functionally, ADP:ATP antiporter that mediates import of ADP into the mitochondrial matrix for ATP synthesis, and export of ATP out to fuel the cell. Cycles between the cytoplasmic-open state (c-state) and the matrix-open state (m-state): operates by the alternating access mechanism with a single substrate-binding site intermittently exposed to either the cytosolic (c-state) or matrix (m-state) side of the inner mitochondrial membrane. The sequence is that of ADP,ATP carrier protein (AAC) from Kluyveromyces lactis (strain ATCC 8585 / CBS 2359 / DSM 70799 / NBRC 1267 / NRRL Y-1140 / WM37) (Yeast).